The sequence spans 105 residues: Delta-hexatoxin-Mg1a (105 aa).

A signal peptide spans 1–18 (MKTLVIACVALVLVVVHG). Positions 19–60 (EVIEEVNEKQLQESVEEKYSLLQRLEKLDEAITAEENRNSRV) are excised as a propeptide. 4 disulfide bridges follow: cysteine 63-cysteine 77, cysteine 70-cysteine 82, cysteine 76-cysteine 93, and cysteine 78-cysteine 105.

This sequence belongs to the neurotoxin 06 (delta-actx) family. As to expression, expressed by the venom gland.

Its subcellular location is the secreted. Its function is as follows. Selectively slows channel inactivation of mammalian Nav1.1/SCN1A, Nav1.3/SCN3A, and Nav1.6/SCN8A and shows higher affinity for insect Nav1/para channels (site 3). Induces tonic repetitive firing of nerve impulses in insect neurons accompanied by plateau potentials. In Macrothele gigas (Japanese funnel web spider), this protein is Delta-hexatoxin-Mg1a.